Consider the following 116-residue polypeptide: L-amino-acid oxidase BjussuLAAO-II (116 aa).

42–45 (GPMR) contacts FAD. Residues Arg-45 and His-78 each coordinate substrate.

This sequence belongs to the flavin monoamine oxidase family. FIG1 subfamily. As to quaternary structure, homodimer; non-covalently linked. It depends on FAD as a cofactor. Post-translationally, glycosylated. In terms of tissue distribution, expressed by the venom gland.

It is found in the secreted. It catalyses the reaction an L-alpha-amino acid + O2 + H2O = a 2-oxocarboxylate + H2O2 + NH4(+). It carries out the reaction L-leucine + O2 + H2O = 4-methyl-2-oxopentanoate + H2O2 + NH4(+). The catalysed reaction is L-phenylalanine + O2 + H2O = 3-phenylpyruvate + H2O2 + NH4(+). The enzyme catalyses L-methionine + O2 + H2O = 4-methylsulfanyl-2-oxobutanoate + H2O2 + NH4(+). It catalyses the reaction L-isoleucine + O2 + H2O = (S)-3-methyl-2-oxopentanoate + H2O2 + NH4(+). It carries out the reaction L-histidine + O2 + H2O = 3-(imidazol-5-yl)pyruvate + H2O2 + NH4(+). The catalysed reaction is L-tyrosine + O2 + H2O = 3-(4-hydroxyphenyl)pyruvate + H2O2 + NH4(+). The enzyme catalyses L-tryptophan + O2 + H2O = indole-3-pyruvate + H2O2 + NH4(+). Its activity is regulated as follows. Its enzymatic activities is reduced by the presence of Zn(2+), Al(3+), Cu(2+), Na(+) or Ni(2+) salts. Its function is as follows. Catalyzes an oxidative deamination of predominantly hydrophobic and aromatic L-amino acids, thus producing hydrogen peroxide that may contribute to the diverse toxic effects of this enzyme. Shows very high enzymatic activity on L-Met and L-Leu, high activity on L-Ile, L-Phe and L-Tyr and moderate activity on L-His. Exhibits diverse biological activities, such as hemorrhage, hemolysis, edema, apoptosis of vascular endothelial cells or tumor cell lines, and antibacterial, as well as regulation of platelet aggregation. Effects of snake L-amino oxidases on platelets are controversial, since they either induce aggregation or inhibit agonist-induced aggregation. These different effects are probably due to different experimental conditions. In vitro, has a strong antiprotozoal effect against Leishmania amazonensis (IC(50)=4.56 ug/mL) and Trypanosoma cruzi (IC(50)=4.85 ug/mL). It also causes cell death and DNA damage in hepatocarcinoma cells (HepG2) in vitro by inducing oxidative stress. It exerts cytotoxicity towards colorectal adenocarcinomahuman cells (Caco-2) by acting on multiple intracellular targets. It diminishes cell viability by decreasing mitochondrial activity, the activity of acid phosphatases, and lysosomal function. In addition, it increases intracellular levels of reactive oxygen species and DNA damage, it elevates the expression of the pro-inflammatory cytokine genes TNF and IL6, and lowers the expression of the apoptotic-related genes. Also induces cytotoxicity (IC(50)=1.80 ug/mL) and apoptosis in MCF-7 cells (a human breast adeno-carcinoma cell line) by activating the intrinsic and extrinsic apoptosis pathways, but are not cytotoxic towards MCF-10A cells (a non-tumorigenic human breast epithelial cell line). This chain is L-amino-acid oxidase BjussuLAAO-II, found in Bothrops jararacussu (Jararacussu).